The sequence spans 338 residues: Mitochondrial amidoxime reducing component 2 (338 aa).

The N-terminal 35 residues, 1–35, are a transit peptide targeting the mitochondrion; the sequence is MGSSSSTALARLGLPGQPRSTWLGVAALGLAAVAL. Glycyl lysine isopeptide (Lys-Gly) (interchain with G-Cter in ubiquitin) cross-links involve residues K59, K138, and K144. K156 bears the N6-acetyllysine; alternate mark. K156 participates in a covalent cross-link: Glycyl lysine isopeptide (Lys-Gly) (interchain with G-Cter in ubiquitin); alternate. Residues K173, K187, K289, and K296 each participate in a glycyl lysine isopeptide (Lys-Gly) (interchain with G-Cter in ubiquitin) cross-link. The region spanning 188-336 is the MOSC domain; sequence GRTTKKLYPS…LRVGDPVYRM (149 aa).

As to quaternary structure, component of a complex composed of cytochrome b5, NADH-cytochrome b5 reductase (CYB5R3) and MTARC2. Requires Mo-molybdopterin as cofactor. Post-translationally, ubiquitinated by PRKN during mitophagy, leading to its degradation and enhancement of mitophagy. Deubiquitinated by USP30.

It is found in the mitochondrion outer membrane. The protein localises to the peroxisome. It carries out the reaction N(omega)-hydroxy-L-arginine + 2 Fe(II)-[cytochrome b5] + 2 H(+) = L-arginine + 2 Fe(III)-[cytochrome b5] + H2O. In terms of biological role, catalyzes the reduction of N-oxygenated molecules, acting as a counterpart of cytochrome P450 and flavin-containing monooxygenases in metabolic cycles. As a component of prodrug-converting system, reduces a multitude of N-hydroxylated prodrugs particularly amidoximes, leading to increased drug bioavailability. May be involved in mitochondrial N(omega)-hydroxy-L-arginine (NOHA) reduction, regulating endogenous nitric oxide levels and biosynthesis. Postulated to cleave the N-OH bond of N-hydroxylated substrates in concert with electron transfer from NADH to cytochrome b5 reductase then to cytochrome b5, the ultimate electron donor that primes the active site for substrate reduction. This is Mitochondrial amidoxime reducing component 2 (Mtarc2) from Rattus norvegicus (Rat).